A 293-amino-acid chain; its full sequence is Formamidopyrimidine-DNA glycosylase (293 aa).

Catalysis depends on P2, which acts as the Schiff-base intermediate with DNA. The active-site Proton donor is the E3. K58 (proton donor; for beta-elimination activity) is an active-site residue. DNA contacts are provided by H104, R123, and R166. The FPG-type zinc-finger motif lies at 257–293 (KVYDREGEPCPTLRCKGHVQRIVQAGRSTFFCATCQR). The active-site Proton donor; for delta-elimination activity is R283.

It belongs to the FPG family. As to quaternary structure, monomer. Requires Zn(2+) as cofactor.

The enzyme catalyses Hydrolysis of DNA containing ring-opened 7-methylguanine residues, releasing 2,6-diamino-4-hydroxy-5-(N-methyl)formamidopyrimidine.. It catalyses the reaction 2'-deoxyribonucleotide-(2'-deoxyribose 5'-phosphate)-2'-deoxyribonucleotide-DNA = a 3'-end 2'-deoxyribonucleotide-(2,3-dehydro-2,3-deoxyribose 5'-phosphate)-DNA + a 5'-end 5'-phospho-2'-deoxyribonucleoside-DNA + H(+). In terms of biological role, involved in base excision repair of DNA damaged by oxidation or by mutagenic agents. Acts as a DNA glycosylase that recognizes and removes damaged bases. Has a preference for oxidized purines, such as 7,8-dihydro-8-oxoguanine (8-oxoG). Has AP (apurinic/apyrimidinic) lyase activity and introduces nicks in the DNA strand. Cleaves the DNA backbone by beta-delta elimination to generate a single-strand break at the site of the removed base with both 3'- and 5'-phosphates. This chain is Formamidopyrimidine-DNA glycosylase, found in Azorhizobium caulinodans (strain ATCC 43989 / DSM 5975 / JCM 20966 / LMG 6465 / NBRC 14845 / NCIMB 13405 / ORS 571).